Here is a 149-residue protein sequence, read N- to C-terminus: Arginine repressor (149 aa).

It belongs to the ArgR family.

It localises to the cytoplasm. Its pathway is amino-acid biosynthesis; L-arginine biosynthesis [regulation]. Functionally, regulates arginine biosynthesis genes. The protein is Arginine repressor of Exiguobacterium sp. (strain ATCC BAA-1283 / AT1b).